The sequence spans 471 residues: Putative multidrug resistance protein MdtD (471 aa).

Topologically, residues Met-1 to Gln-11 are periplasmic. Residues Leu-12–Ala-32 form a helical membrane-spanning segment. Over Leu-33–His-48 the chain is Cytoplasmic. The chain crosses the membrane as a helical span at residues Met-49–Ala-69. At Asp-70–Asn-76 the chain is on the periplasmic side. A helical membrane pass occupies residues Ile-77–Thr-97. Residues Leu-98–Leu-101 are Cytoplasmic-facing. Residues Leu-102–Met-124 traverse the membrane as a helical segment. At Lys-125–Thr-137 the chain is on the periplasmic side. The chain crosses the membrane as a helical span at residues Phe-138 to Val-158. At Glu-159–His-164 the chain is on the cytoplasmic side. Residues Trp-165–Met-185 form a helical membrane-spanning segment. Residues Pro-186 to Asp-196 are Periplasmic-facing. A helical membrane pass occupies residues Leu-197–Ser-217. The Cytoplasmic segment spans residues Lys-218–Pro-224. A helical transmembrane segment spans residues Leu-225–Ala-245. At Gln-246–Asn-262 the chain is on the periplasmic side. Residues Phe-263 to Met-283 traverse the membrane as a helical segment. Residues Thr-284–Pro-285 are Cytoplasmic-facing. Residues Val-286–Met-306 form a helical membrane-spanning segment. At Val-307 to Thr-341 the chain is on the periplasmic side. The helical transmembrane segment at Leu-342–Leu-362 threads the bilayer. Topologically, residues Gln-363–Ser-395 are cytoplasmic. The helical transmembrane segment at Met-396–Phe-416 threads the bilayer. The Periplasmic portion of the chain corresponds to Gly-417–Thr-430. The chain crosses the membrane as a helical span at residues Val-431–Ala-451. Residues Arg-452–Gln-471 lie on the Cytoplasmic side of the membrane.

Belongs to the major facilitator superfamily. TCR/Tet family.

It localises to the cell inner membrane. This is Putative multidrug resistance protein MdtD from Escherichia coli O1:K1 / APEC.